Here is a 156-residue protein sequence, read N- to C-terminus: 6,7-dimethyl-8-ribityllumazine synthase (156 aa).

Residues tryptophan 28, 60–62, and 82–84 each bind 5-amino-6-(D-ribitylamino)uracil; these read SFE and VVV. 87–88 provides a ligand contact to (2S)-2-hydroxy-3-oxobutyl phosphate; it reads GT. Catalysis depends on histidine 90, which acts as the Proton donor. Phenylalanine 115 contacts 5-amino-6-(D-ribitylamino)uracil. Arginine 129 contributes to the (2S)-2-hydroxy-3-oxobutyl phosphate binding site.

This sequence belongs to the DMRL synthase family.

The enzyme catalyses (2S)-2-hydroxy-3-oxobutyl phosphate + 5-amino-6-(D-ribitylamino)uracil = 6,7-dimethyl-8-(1-D-ribityl)lumazine + phosphate + 2 H2O + H(+). The protein operates within cofactor biosynthesis; riboflavin biosynthesis; riboflavin from 2-hydroxy-3-oxobutyl phosphate and 5-amino-6-(D-ribitylamino)uracil: step 1/2. Its function is as follows. Catalyzes the formation of 6,7-dimethyl-8-ribityllumazine by condensation of 5-amino-6-(D-ribitylamino)uracil with 3,4-dihydroxy-2-butanone 4-phosphate. This is the penultimate step in the biosynthesis of riboflavin. The chain is 6,7-dimethyl-8-ribityllumazine synthase from Kocuria rhizophila (strain ATCC 9341 / DSM 348 / NBRC 103217 / DC2201).